The primary structure comprises 635 residues: Probable clathrin assembly protein At4g32285 (635 aa).

The region spanning 23 to 159 is the ENTH domain; it reads VASNMAPDLE…ELALFERRGR (137 aa). Residues 157–208 form a disordered region; it reads RGRNGGGSSSSHQSNGDDGYNRSRDDFRSPPPRTYDYETGNGFGMPKRSRSF. Low complexity predominate over residues 165–174; the sequence is SSSHQSNGDD. The segment covering 175–184 has biased composition (basic and acidic residues); it reads GYNRSRDDFR. Residue Ser207 is modified to Phosphoserine. Thr224 is subject to Phosphothreonine. The span at 357 to 369 shows a compositional bias: basic and acidic residues; that stretch reads AKRAKSPERKEIE. The interval 357–412 is disordered; the sequence is AKRAKSPERKEIEAPPAPAPPVEEPVDMNEIKALPPPENHTPPPPPAPEPKPQQPQ. Residues 390–409 are compositionally biased toward pro residues; it reads LPPPENHTPPPPPAPEPKPQ.

The protein localises to the membrane. It localises to the clathrin-coated pit. Its subcellular location is the golgi apparatus. The protein resides in the cytoplasmic vesicle. It is found in the clathrin-coated vesicle. This is Probable clathrin assembly protein At4g32285 from Arabidopsis thaliana (Mouse-ear cress).